Here is a 238-residue protein sequence, read N- to C-terminus: UDP-2,3-diacylglucosamine hydrolase (238 aa).

5 residues coordinate Mn(2+): D8, H10, D41, N78, and H113. 78–79 contacts substrate; the sequence is NR. Substrate is bound by residues D121, S159, N163, K166, and H194. Residues H194 and H196 each coordinate Mn(2+).

This sequence belongs to the LpxH family. The cofactor is Mn(2+).

Its subcellular location is the cell inner membrane. The enzyme catalyses UDP-2-N,3-O-bis[(3R)-3-hydroxytetradecanoyl]-alpha-D-glucosamine + H2O = 2-N,3-O-bis[(3R)-3-hydroxytetradecanoyl]-alpha-D-glucosaminyl 1-phosphate + UMP + 2 H(+). It functions in the pathway glycolipid biosynthesis; lipid IV(A) biosynthesis; lipid IV(A) from (3R)-3-hydroxytetradecanoyl-[acyl-carrier-protein] and UDP-N-acetyl-alpha-D-glucosamine: step 4/6. Functionally, hydrolyzes the pyrophosphate bond of UDP-2,3-diacylglucosamine to yield 2,3-diacylglucosamine 1-phosphate (lipid X) and UMP by catalyzing the attack of water at the alpha-P atom. Involved in the biosynthesis of lipid A, a phosphorylated glycolipid that anchors the lipopolysaccharide to the outer membrane of the cell. The chain is UDP-2,3-diacylglucosamine hydrolase from Shewanella piezotolerans (strain WP3 / JCM 13877).